The following is a 63-amino-acid chain: Small ribosomal subunit protein eS17 (63 aa).

Belongs to the eukaryotic ribosomal protein eS17 family.

In Haloarcula marismortui (strain ATCC 43049 / DSM 3752 / JCM 8966 / VKM B-1809) (Halobacterium marismortui), this protein is Small ribosomal subunit protein eS17 (rps17e).